The following is a 338-amino-acid chain: Methionine import ATP-binding protein MetN 1 (338 aa).

Residues 2–241 (IELHQVSKSF…AKHATTKRFV (240 aa)) form the ABC transporter domain. 38–45 (GYSGAGKS) contributes to the ATP binding site.

This sequence belongs to the ABC transporter superfamily. Methionine importer (TC 3.A.1.24) family. The complex is composed of two ATP-binding proteins (MetN), two transmembrane proteins (MetI) and a solute-binding protein (MetQ).

It is found in the cell membrane. It carries out the reaction L-methionine(out) + ATP + H2O = L-methionine(in) + ADP + phosphate + H(+). It catalyses the reaction D-methionine(out) + ATP + H2O = D-methionine(in) + ADP + phosphate + H(+). In terms of biological role, part of the ABC transporter complex MetNIQ involved in methionine import. Responsible for energy coupling to the transport system. This chain is Methionine import ATP-binding protein MetN 1, found in Listeria monocytogenes serovar 1/2a (strain ATCC BAA-679 / EGD-e).